Consider the following 391-residue polypeptide: 4-coumarate--CoA ligase (391 aa).

Belongs to the ATP-dependent AMP-binding enzyme family.

The enzyme catalyses (E)-4-coumarate + ATP + CoA = (E)-4-coumaroyl-CoA + AMP + diphosphate. In terms of biological role, converts p-coumaric acid into p-coumaryl CoA. This is necessary for the activation of the photoactive yellow protein (PYP) chromophore. The sequence is that of 4-coumarate--CoA ligase (pcl) from Halorhodospira halophila (Ectothiorhodospira halophila).